The primary structure comprises 318 residues: Mitochondrial coenzyme A transporter SLC25A42 (318 aa).

Solcar repeat units follow at residues 31–117, 129–214, and 224–312; these read RQVL…YKRI, LPPW…LKSL, and PYPF…MQIL. The next 6 membrane-spanning stretches (helical) occupy residues 33–53, 89–109, 135–155, 186–206, 230–250, and 293–313; these read VLSS…AVAP, LWRG…IQFS, LFAG…LDLV, LYHG…LSFF, MIFG…LDVV, and VKGP…QILL.

The protein belongs to the mitochondrial carrier (TC 2.A.29) family.

The protein localises to the mitochondrion inner membrane. It catalyses the reaction ADP(out) + CoA(in) = ADP(in) + CoA(out). The catalysed reaction is 3'-dephospho-CoA(in) + ADP(out) = 3'-dephospho-CoA(out) + ADP(in). The enzyme catalyses adenosine 3',5'-bisphosphate(in) + ADP(out) = adenosine 3',5'-bisphosphate(out) + ADP(in). It carries out the reaction AMP(in) + ADP(out) = AMP(out) + ADP(in). It catalyses the reaction dADP(in) + ADP(out) = dADP(out) + ADP(in). The catalysed reaction is ADP(in) + ATP(out) = ADP(out) + ATP(in). In terms of biological role, mitochondrial carrier mediating the transport of coenzyme A (CoA) in mitochondria in exchange for intramitochondrial (deoxy)adenine nucleotides and adenosine 3',5'-diphosphate. The protein is Mitochondrial coenzyme A transporter SLC25A42 (SLC25A42) of Homo sapiens (Human).